Reading from the N-terminus, the 334-residue chain is Putative heme-binding peroxidase (334 aa).

H40 acts as the Proton acceptor in catalysis. H169 contacts heme b. Catalysis depends on W185, which acts as the Tryptophan radical intermediate.

This sequence belongs to the peroxidase family. Cytochrome c peroxidase subfamily. Requires heme b as cofactor.

Destroys radicals which are normally produced within the cells and which are toxic to biological systems. The protein is Putative heme-binding peroxidase of Cryptococcus neoformans var. neoformans serotype D (strain JEC21 / ATCC MYA-565) (Filobasidiella neoformans).